The chain runs to 198 residues: Mediator of RNA polymerase II transcription subunit 20 (198 aa).

This sequence belongs to the Mediator complex subunit 20 family. As to quaternary structure, component of the Mediator complex.

It localises to the nucleus. In terms of biological role, component of the Mediator complex, a coactivator involved in the regulated transcription of nearly all RNA polymerase II-dependent genes. Mediator functions as a bridge to convey information from gene-specific regulatory proteins to the basal RNA polymerase II transcription machinery. Mediator is recruited to promoters by direct interactions with regulatory proteins and serves as a scaffold for the assembly of a functional preinitiation complex with RNA polymerase II and the general transcription factors. The protein is Mediator of RNA polymerase II transcription subunit 20 (mdt-20) of Caenorhabditis briggsae.